A 1222-amino-acid chain; its full sequence is PAN2-PAN3 deadenylation complex catalytic subunit PAN2 (1222 aa).

WD repeat units lie at residues 104–143 and 276–315; these read PEMT…IVDQ and ANVA…HFNE. Residues 316 to 451 are linker; sequence IGKETEFSDI…GLKINGETKE (136 aa). Positions 452-821 constitute a USP domain; it reads DPLLKYSNVE…SPCTLAYQIS (370 aa). An Exonuclease domain is found at 871–1027; that stretch reads ALDTEFVDLE…WAVFKEYIQE (157 aa). Residues D873, E875, and D982 each coordinate a divalent metal cation. The segment at 1035 to 1067 is disordered; that stretch reads TSITTTTNPNIHDANTSTTTTTAITTTPPEGHD. A compositionally biased stretch (low complexity) spans 1050-1061; that stretch reads TSTTTTTAITTT. An a divalent metal cation-binding site is contributed by D1071. 2 disordered regions span residues 1110–1152 and 1167–1222; these read PARY…LSGR and ASVT…SPMR. Over residues 1119 to 1133 the composition is skewed to low complexity; the sequence is PNPNNNNINNGVNPN. Over residues 1134–1144 the composition is skewed to polar residues; that stretch reads GLSTPGSTNPI. Positions 1180 to 1191 are enriched in low complexity; sequence NGSMSGSTPSTP. Gly residues predominate over residues 1207-1216; that stretch reads SFGGAKGLTF.

This sequence belongs to the peptidase C19 family. PAN2 subfamily. Forms a heterotrimer with an asymmetric homodimer of the regulatory subunit PAN3 to form the poly(A)-nuclease (PAN) deadenylation complex. It depends on a divalent metal cation as a cofactor.

It is found in the cytoplasm. It catalyses the reaction Exonucleolytic cleavage of poly(A) to 5'-AMP.. With respect to regulation, positively regulated by the regulatory subunit PAN3. Catalytic subunit of the poly(A)-nuclease (PAN) deadenylation complex, one of two cytoplasmic mRNA deadenylases involved in mRNA turnover. PAN specifically shortens poly(A) tails of RNA and the activity is stimulated by poly(A)-binding protein PAB1. PAN deadenylation is followed by rapid degradation of the shortened mRNA tails by the CCR4-NOT complex. Deadenylated mRNAs are then degraded by two alternative mechanisms, namely exosome-mediated 3'-5' exonucleolytic degradation, or deadenylation-dependent mRNA decaping and subsequent 5'-3' exonucleolytic degradation by XRN1. May also be involved in post-transcriptional maturation of mRNA poly(A) tails. This is PAN2-PAN3 deadenylation complex catalytic subunit PAN2 from Coccidioides immitis (strain RS) (Valley fever fungus).